Here is a 303-residue protein sequence, read N- to C-terminus: Acetyl-coenzyme A carboxylase carboxyl transferase subunit beta (303 aa).

One can recognise a CoA carboxyltransferase N-terminal domain in the interval 29 to 298; that stretch reads LWVKCPETGQ…ATPAPASAAA (270 aa).

The protein belongs to the AccD/PCCB family. In terms of assembly, acetyl-CoA carboxylase is a heterohexamer composed of biotin carboxyl carrier protein (AccB), biotin carboxylase (AccC) and two subunits each of ACCase subunit alpha (AccA) and ACCase subunit beta (AccD).

It is found in the cytoplasm. The enzyme catalyses N(6)-carboxybiotinyl-L-lysyl-[protein] + acetyl-CoA = N(6)-biotinyl-L-lysyl-[protein] + malonyl-CoA. It functions in the pathway lipid metabolism; malonyl-CoA biosynthesis; malonyl-CoA from acetyl-CoA: step 1/1. Functionally, component of the acetyl coenzyme A carboxylase (ACC) complex. Biotin carboxylase (BC) catalyzes the carboxylation of biotin on its carrier protein (BCCP) and then the CO(2) group is transferred by the transcarboxylase to acetyl-CoA to form malonyl-CoA. This is Acetyl-coenzyme A carboxylase carboxyl transferase subunit beta from Methylobacterium sp. (strain 4-46).